Reading from the N-terminus, the 122-residue chain is Small ribosomal subunit protein uS13 (122 aa).

The interval 95–122 (GLPVRGQRTHTNARTRKGPAKSIAGKKK) is disordered.

The protein belongs to the universal ribosomal protein uS13 family. Part of the 30S ribosomal subunit. Forms a loose heterodimer with protein S19. Forms two bridges to the 50S subunit in the 70S ribosome.

Functionally, located at the top of the head of the 30S subunit, it contacts several helices of the 16S rRNA. In the 70S ribosome it contacts the 23S rRNA (bridge B1a) and protein L5 of the 50S subunit (bridge B1b), connecting the 2 subunits; these bridges are implicated in subunit movement. Contacts the tRNAs in the A and P-sites. The sequence is that of Small ribosomal subunit protein uS13 from Nitrobacter hamburgensis (strain DSM 10229 / NCIMB 13809 / X14).